Here is a 204-residue protein sequence, read N- to C-terminus: FlaA locus 22.9 kDa protein (204 aa).

Residues 115-140 (EKTAEDQKKSSEDHTEGSADSKASSE) form a disordered region.

The sequence is that of FlaA locus 22.9 kDa protein (ylxF) from Bacillus subtilis (strain 168).